We begin with the raw amino-acid sequence, 331 residues long: Spondin-2 (331 aa).

The signal sequence occupies residues 1–26; it reads MENPSPAAALGKALCALLLATLGAAG. In terms of domain architecture, Spondin spans 31–221; sequence GESICSARAL…EITSSSPSHP (191 aa). C35 and C171 are disulfide-bonded. A divalent metal cation is bound at residue E141. The Ca(2+) site is built by D160, D188, and D192. The 55-residue stretch at 277–331 folds into the TSP type-1 domain; it reads DCEVSLWSSWGLCGGHCGRLGTKSRTRYVRVQPANNGSPCPELEEEAECVPDNCV. The C-linked (Man) tryptophan glycan is linked to W283.

Monomer. Interacts with integrin. As to expression, expressed in normal lung tissue but not in lung carcinoma cell lines.

It is found in the secreted. It localises to the extracellular space. The protein localises to the extracellular matrix. Cell adhesion protein that promotes adhesion and outgrowth of hippocampal embryonic neurons. Binds directly to bacteria and their components and functions as an opsonin for macrophage phagocytosis of bacteria. Essential in the initiation of the innate immune response and represents a unique pattern-recognition molecule in the ECM for microbial pathogens. Binds bacterial lipopolysaccharide (LPS). The sequence is that of Spondin-2 (SPON2) from Homo sapiens (Human).